A 124-amino-acid chain; its full sequence is Small ribosomal subunit protein uS12 (124 aa).

Asp89 is subject to 3-methylthioaspartic acid. The interval 105–124 is disordered; sequence AGVKDRKKGRSKYGAKRPKA. Residues 109–124 are compositionally biased toward basic residues; it reads DRKKGRSKYGAKRPKA.

The protein belongs to the universal ribosomal protein uS12 family. As to quaternary structure, part of the 30S ribosomal subunit. Contacts proteins S8 and S17. May interact with IF1 in the 30S initiation complex.

Functionally, with S4 and S5 plays an important role in translational accuracy. Interacts with and stabilizes bases of the 16S rRNA that are involved in tRNA selection in the A site and with the mRNA backbone. Located at the interface of the 30S and 50S subunits, it traverses the body of the 30S subunit contacting proteins on the other side and probably holding the rRNA structure together. The combined cluster of proteins S8, S12 and S17 appears to hold together the shoulder and platform of the 30S subunit. This Dichelobacter nodosus (strain VCS1703A) protein is Small ribosomal subunit protein uS12.